The chain runs to 275 residues: NH(3)-dependent NAD(+) synthetase (275 aa).

Position 46-53 (46-53) interacts with ATP; the sequence is GISGGQDS. Position 52 (Asp52) interacts with Mg(2+). Position 140 (Arg140) interacts with deamido-NAD(+). Thr160 is an ATP binding site. Glu165 contacts Mg(2+). Residues Lys173 and Asp180 each contribute to the deamido-NAD(+) site. Residues Lys189 and Thr211 each coordinate ATP. 260–261 is a binding site for deamido-NAD(+); the sequence is HK.

It belongs to the NAD synthetase family. In terms of assembly, homodimer.

The catalysed reaction is deamido-NAD(+) + NH4(+) + ATP = AMP + diphosphate + NAD(+) + H(+). Its pathway is cofactor biosynthesis; NAD(+) biosynthesis; NAD(+) from deamido-NAD(+) (ammonia route): step 1/1. Functionally, catalyzes the ATP-dependent amidation of deamido-NAD to form NAD. Uses ammonia as a nitrogen source. The protein is NH(3)-dependent NAD(+) synthetase of Escherichia fergusonii (strain ATCC 35469 / DSM 13698 / CCUG 18766 / IAM 14443 / JCM 21226 / LMG 7866 / NBRC 102419 / NCTC 12128 / CDC 0568-73).